The following is a 153-amino-acid chain: Arginine regulator (153 aa).

It belongs to the ArgR family.

It is found in the cytoplasm. Its pathway is amino-acid degradation; L-arginine degradation via ADI pathway. Functionally, regulates the transcription of the arc operon, involved in arginine catabolism. The chain is Arginine regulator (argR1) from Lactiplantibacillus plantarum (strain ATCC BAA-793 / NCIMB 8826 / WCFS1) (Lactobacillus plantarum).